Reading from the N-terminus, the 704-residue chain is Ion-translocating oxidoreductase complex subunit C (704 aa).

4Fe-4S ferredoxin-type domains follow at residues 368–397 (MGAPQEEKSCIRCSACADACPADLLPQQLY) and 407–436 (KATAHHIADCIECGACAWVCPSNIPLVQYF). Residues Cys377, Cys380, Cys383, Cys387, Cys416, Cys419, Cys422, and Cys426 each coordinate [4Fe-4S] cluster. Residues 534 to 682 (QARAKQAAHP…AEPADPRKAA (149 aa)) are disordered.

It belongs to the 4Fe4S bacterial-type ferredoxin family. RnfC subfamily. As to quaternary structure, the complex is composed of six subunits: RsxA, RsxB, RsxC, RsxD, RsxE and RsxG. [4Fe-4S] cluster is required as a cofactor.

It is found in the cell inner membrane. Functionally, part of a membrane-bound complex that couples electron transfer with translocation of ions across the membrane. Required to maintain the reduced state of SoxR. The chain is Ion-translocating oxidoreductase complex subunit C from Salmonella enteritidis PT4 (strain P125109).